The following is a 391-amino-acid chain: Small ribosomal subunit protein mS29 (391 aa).

The transit peptide at 1-17 (MLTGITRLFSRVQKLDP) directs the protein to the mitochondrion. The segment at 30–59 (NSQVPAERPRTVSRTSDSDPAKHGEQHEGQ) is disordered. The span at 45-59 (SDSDPAKHGEQHEGQ) shows a compositional bias: basic and acidic residues. 2 positions are modified to N6-acetyllysine: K168 and K200.

The protein belongs to the mitochondrion-specific ribosomal protein mS29 family. In terms of assembly, component of the mitochondrial ribosome small subunit (28S) which comprises a 12S rRNA and about 30 distinct proteins. Interacts with DELE1. Interacts with NOA1.

Its subcellular location is the mitochondrion. The catalysed reaction is GTP + H2O = GDP + phosphate + H(+). Functionally, as a component of the mitochondrial small ribosomal subunit, it plays a role in the translation of mitochondrial mRNAs. Involved in mediating interferon-gamma-induced cell death. Displays GTPase activity in vitro. In Mus musculus (Mouse), this protein is Small ribosomal subunit protein mS29.